A 403-amino-acid polypeptide reads, in one-letter code: Protein-glutamate methylesterase/protein-glutamine glutaminase (403 aa).

Residues 8-126 (AVLIVDDSAL…SAHLRTVSRK (119 aa)) enclose the Response regulatory domain. Residue D59 is modified to 4-aspartylphosphate. The 190-residue stretch at 204–393 (PLRESGALQI…VSLDDMAATI (190 aa)) folds into the CheB-type methylesterase domain. Residues S219, H246, and D342 contribute to the active site.

It belongs to the CheB family. In terms of processing, phosphorylated by CheA. Phosphorylation of the N-terminal regulatory domain activates the methylesterase activity.

It is found in the cytoplasm. It carries out the reaction [protein]-L-glutamate 5-O-methyl ester + H2O = L-glutamyl-[protein] + methanol + H(+). The enzyme catalyses L-glutaminyl-[protein] + H2O = L-glutamyl-[protein] + NH4(+). In terms of biological role, involved in chemotaxis. Part of a chemotaxis signal transduction system that modulates chemotaxis in response to various stimuli. Catalyzes the demethylation of specific methylglutamate residues introduced into the chemoreceptors (methyl-accepting chemotaxis proteins or MCP) by CheR. Also mediates the irreversible deamidation of specific glutamine residues to glutamic acid. This chain is Protein-glutamate methylesterase/protein-glutamine glutaminase, found in Treponema pallidum (strain Nichols).